The primary structure comprises 649 residues: 1,4-alpha-glucan branching enzyme GlgB (649 aa).

Asp315 (nucleophile) is an active-site residue. Catalysis depends on Glu366, which acts as the Proton donor.

It belongs to the glycosyl hydrolase 13 family. GlgB subfamily. As to quaternary structure, monomer.

The catalysed reaction is Transfers a segment of a (1-&gt;4)-alpha-D-glucan chain to a primary hydroxy group in a similar glucan chain.. Its pathway is glycan biosynthesis; glycogen biosynthesis. Its function is as follows. Catalyzes the formation of the alpha-1,6-glucosidic linkages in glycogen by scission of a 1,4-alpha-linked oligosaccharide from growing alpha-1,4-glucan chains and the subsequent attachment of the oligosaccharide to the alpha-1,6 position. This is 1,4-alpha-glucan branching enzyme GlgB from Ligilactobacillus salivarius (strain UCC118) (Lactobacillus salivarius).